The following is a 725-amino-acid chain: LPS-assembly protein LptD (725 aa).

The N-terminal stretch at 1-25 (MSLLSKLHLILYICLLLLPLRFVNA) is a signal peptide.

Belongs to the LptD family. As to quaternary structure, component of the lipopolysaccharide transport and assembly complex. Interacts with LptE and LptA.

Its subcellular location is the cell outer membrane. Functionally, together with LptE, is involved in the assembly of lipopolysaccharide (LPS) at the surface of the outer membrane. In Nitrosomonas eutropha (strain DSM 101675 / C91 / Nm57), this protein is LPS-assembly protein LptD.